The primary structure comprises 896 residues: Vacuolar zinc transporter TgZnT (896 aa).

Over 1–472 the chain is Cytoplasmic; that stretch reads MPFSCFVFSQ…ETGTQRARRK (472 aa). The segment covering 82–91 has biased composition (basic and acidic residues); it reads VLSSRGDESV. Disordered stretches follow at residues 82-104, 205-227, and 255-329; these read VLSS…SPGF, MKEI…RPCA, and SSSC…SSAS. Composition is skewed to low complexity over residues 210-225 and 255-266; these read SPRS…SSRP and SSSCCSRSNSSS. Residues 303–322 are compositionally biased toward basic and acidic residues; it reads VHERRAEATCCAPRDRHGGD. The helical transmembrane segment at 473 to 493 threads the bilayer; that stretch reads LVMASMVCCVFMFVEIVAGVL. Topologically, residues 494 to 502 are vacuolar; sequence ANSLALMTD. The chain crosses the membrane as a helical span at residues 503-523; it reads ASHLLSDLCAFLISLFALWVS. Residues 524-539 lie on the Cytoplasmic side of the membrane; that stretch reads ELKGNPSMSFGYHRAE. The chain crosses the membrane as a helical span at residues 540–560; sequence ILGALLSVFLIWVLTAVLIYA. Residues 561-573 lie on the Vacuolar side of the membrane; the sequence is ACFRLVDPPQVDG. A helical membrane pass occupies residues 574 to 594; that stretch reads ELMFWTALLGTLANLFMTHIL. Topologically, residues 595–737 are cytoplasmic; it reads KVHSHGIGQV…YENMNLRAAY (143 aa). Positions 621 to 707 are disordered; sequence LQASSSSPEK…RPFSASSAGS (87 aa). A compositionally biased stretch (basic and acidic residues) spans 656 to 680; it reads RDAEAGRDAEAGRDAEAGRDAETGR. A helical transmembrane segment spans residues 738–758; the sequence is IHALGDLLQNIGVMIASALIW. The Vacuolar segment spans residues 759–762; that stretch reads WRPD. Residues 763 to 783 traverse the membrane as a helical segment; it reads WAIADPICTFIFSIFVLFTTL. Over 784–896 the chain is Cytoplasmic; sequence SILKEALNVL…CSDPMKVFRR (113 aa).

This sequence belongs to the cation diffusion facilitator (CDF) transporter (TC 2.A.4) family. SLC30A subfamily.

It localises to the vacuole membrane. Its subcellular location is the cytoplasmic vesicle membrane. Functionally, vacuolar zinc transporter that is probably involved in the transfer of zinc ions from the cytosol to the vacuole for intracellular storage. Plays an essential role in extracellular zinc tolerance. The protein is Vacuolar zinc transporter TgZnT of Toxoplasma gondii (strain ATCC 50853 / GT1).